The sequence spans 298 residues: GTPase Era (298 aa).

The Era-type G domain occupies 4–171 (KSGFVSVIGR…LKEALDYIPE (168 aa)). The interval 12 to 19 (GRPNVGKS) is G1. Residue 12–19 (GRPNVGKS) coordinates GTP. The tract at residues 38–42 (QTTRN) is G2. The interval 59 to 62 (DTPG) is G3. GTP is bound by residues 59-63 (DTPGI) and 121-124 (NKVD). The G4 stretch occupies residues 121–124 (NKVD). A G5 region spans residues 150–152 (ISA). The KH type-2 domain maps to 202–279 (LDDEVPHGVG…FLELWVKVKP (78 aa)).

Belongs to the TRAFAC class TrmE-Era-EngA-EngB-Septin-like GTPase superfamily. Era GTPase family. As to quaternary structure, monomer.

It is found in the cytoplasm. The protein resides in the cell membrane. Functionally, an essential GTPase that binds both GDP and GTP, with rapid nucleotide exchange. Plays a role in 16S rRNA processing and 30S ribosomal subunit biogenesis and possibly also in cell cycle regulation and energy metabolism. This Ruminiclostridium cellulolyticum (strain ATCC 35319 / DSM 5812 / JCM 6584 / H10) (Clostridium cellulolyticum) protein is GTPase Era.